Here is a 240-residue protein sequence, read N- to C-terminus: Orotidine 5'-phosphate decarboxylase (240 aa).

Residues Asp10, Lys33, Asp60–Thr69, Thr123, Arg185, Gln194, Gly214, and Arg215 each bind substrate. The Proton donor role is filled by Lys62.

The protein belongs to the OMP decarboxylase family. Type 1 subfamily. As to quaternary structure, homodimer.

It carries out the reaction orotidine 5'-phosphate + H(+) = UMP + CO2. The protein operates within pyrimidine metabolism; UMP biosynthesis via de novo pathway; UMP from orotate: step 2/2. Catalyzes the decarboxylation of orotidine 5'-monophosphate (OMP) to uridine 5'-monophosphate (UMP). In Lactobacillus delbrueckii subsp. bulgaricus (strain ATCC 11842 / DSM 20081 / BCRC 10696 / JCM 1002 / NBRC 13953 / NCIMB 11778 / NCTC 12712 / WDCM 00102 / Lb 14), this protein is Orotidine 5'-phosphate decarboxylase.